The following is a 652-amino-acid chain: Drebrin (652 aa).

Ala2 bears the N-acetylalanine mark. The ADF-H domain occupies 5 to 134 (GFAAHRLELL…DPGAIGQRLS (130 aa)). Basic and acidic residues-rich tracts occupy residues 211–236 (MEQE…EEHR) and 288–298 (DNPREFFKQQE). Disordered regions lie at residues 211–350 (MEQE…YITC) and 371–652 (SAAG…GGGL). The segment covering 328–340 (SGPPSSSSSSSSP) has biased composition (low complexity). Positions 507-517 (PDTPAGPPVPP) are enriched in pro residues. 2 stretches are compositionally biased toward acidic residues: residues 540–554 (QHEE…EEAT) and 640–652 (PLPE…GGGL).

As to expression, brain neurons.

It localises to the cytoplasm. It is found in the cell projection. The protein resides in the dendrite. Its subcellular location is the cell cortex. The protein localises to the cell junction. It localises to the growth cone. Functionally, actin cytoskeleton-organizing protein that plays a role in the formation of cell projections. Plays a role in dendritic spine morphogenesis and organization, including the localization of the dopamine receptor DRD1 to the dendritic spines. Involved in synaptic plasticity. The sequence is that of Drebrin (DBN1) from Gallus gallus (Chicken).